Here is a 606-residue protein sequence, read N- to C-terminus: MSNLSRRNFITGGAIAALGGTLAIAGCAPKGESSSTVAGAAGEGAQAWTGTANGKGGELTVEVITEGDSIARINPLKSRESYGVGTAGIDVLSDLIVKNQTLNVDMVTGATVSSMAFLTAVSDAVDASGMKSSEWKKREKAVPQAPEGLTTDVDVVVVGAGGAGYAAALTAAEAGKNVVLLEKLGIVGGDTILSGGAMAVPNNWFQKRDGIEDSVEKMAEDMIVGGDHVGDPDLVNVICEGAYGAMEWLIFNGGVAWQPYERFFGGHSVIRSLIPEGNEGSGIICKLDKRAEGLKNLKVCRNTKADELVQDASGAVVGLKATNTATGETYDFKAKAVILAAGGFGSNVEMRMKYNPEMDEKILSTDSVGATGDCHVMAEKIGANLIDMQYIQTYPTCDTQTGALLYVGNMRLENRAICINKEGDRFVEEMERRDVISNAIKEQTDGIGYMIFNQDGLDHTDIATVNAAEMDGLFGRGQLAKGETIAEACEPFGIDAAELQKTVEKWNGYCKDGADPDFNYRAALNPIEGGPYYILAYKPSVHYTMGGLHINTDAQVLDSDAAPIPGLFAAGEQAGHKMGTNRLGSCSITDVFVFGRVAGANAAALA.

Residues 1–40 (MSNLSRRNFITGGAIAALGGTLAIAGCAPKGESSSTVAGA) constitute a signal peptide (tat-type signal). Position 111 is an FMN phosphoryl threonine (Thr-111). Ala-163, Glu-182, Thr-191, Gly-195, Gly-196, Ala-197, Ala-305, and Asp-373 together coordinate FAD. Arg-433 acts as the Proton donor in catalysis. The FAD site is built by Glu-572 and Ile-588.

Belongs to the FAD-dependent oxidoreductase 2 family. FRD/SDH subfamily. Requires FAD as cofactor. FMN is required as a cofactor. Post-translationally, predicted to be exported by the Tat system. The position of the signal peptide cleavage has not been experimentally proven.

It catalyses the reaction dihydrourocanate + A = urocanate + AH2. Catalyzes the two-electron reduction of urocanate to dihydrourocanate (also named imidazole propionate or deamino-histidine). Dihydrourocanate is present at higher concentrations in subjects with type 2 diabetes, and directly impairs glucose tolerance and insulin signaling at the level of insulin receptor substrate (IRS) through activation of p38 gamma (MAPK12)-p62-mTORC1. Therefore, the UrdA enzyme from the gut bacteria E.lenta strain DSM 2243 may contribute to the pathogenesis of type 2 diabetes by producing the microbial metabolite dihydrourocanate. In Eggerthella lenta (strain ATCC 25559 / DSM 2243 / CCUG 17323 / JCM 9979 / KCTC 3265 / NCTC 11813 / VPI 0255 / 1899 B) (Eubacterium lentum), this protein is Urocanate reductase.